Reading from the N-terminus, the 288-residue chain is 2-hydroxy-6-oxononadienedioate/2-hydroxy-6-oxononatrienedioate hydrolase (288 aa).

Catalysis depends on histidine 267, which acts as the Proton acceptor.

Belongs to the AB hydrolase superfamily. MhpC family. Homodimer.

The enzyme catalyses (2Z,4E)-2-hydroxy-6-oxonona-2,4-dienedioate + H2O = (2Z)-2-hydroxypenta-2,4-dienoate + succinate + H(+). The catalysed reaction is (2Z,4E,7E)-2-hydroxy-6-oxonona-2,4,7-trienedioate + H2O = (2Z)-2-hydroxypenta-2,4-dienoate + fumarate + H(+). It participates in aromatic compound metabolism; 3-phenylpropanoate degradation. Catalyzes the cleavage of the C5-C6 bond of 2-hydroxy-6-oxononadienedioate and 2-hydroxy-6-oxononatrienedioate, a dienol ring fission product of the bacterial meta-cleavage pathway for degradation of phenylpropionic acid. The protein is 2-hydroxy-6-oxononadienedioate/2-hydroxy-6-oxononatrienedioate hydrolase of Klebsiella pneumoniae subsp. pneumoniae (strain ATCC 700721 / MGH 78578).